Consider the following 538-residue polypeptide: Chaperonin GroEL (538 aa).

ATP contacts are provided by residues threonine 29–proline 32, aspartate 86–threonine 90, glycine 413, asparagine 477–alanine 479, and aspartate 493.

Belongs to the chaperonin (HSP60) family. As to quaternary structure, forms a cylinder of 14 subunits composed of two heptameric rings stacked back-to-back. Interacts with the co-chaperonin GroES.

It is found in the cytoplasm. The enzyme catalyses ATP + H2O + a folded polypeptide = ADP + phosphate + an unfolded polypeptide.. Functionally, together with its co-chaperonin GroES, plays an essential role in assisting protein folding. The GroEL-GroES system forms a nano-cage that allows encapsulation of the non-native substrate proteins and provides a physical environment optimized to promote and accelerate protein folding. In Bifidobacterium adolescentis (strain ATCC 15703 / DSM 20083 / NCTC 11814 / E194a), this protein is Chaperonin GroEL.